The sequence spans 594 residues: UvrABC system protein C (594 aa).

One can recognise a GIY-YIG domain in the interval 13–99 (NGSGVYQYFD…IKQLKPKYNI (87 aa)). In terms of domain architecture, UVR spans 205–240 (DKLIKELQLKMDRLSSNLRFEEALIYRDRISKIQKI).

Belongs to the UvrC family. As to quaternary structure, interacts with UvrB in an incision complex.

It localises to the cytoplasm. In terms of biological role, the UvrABC repair system catalyzes the recognition and processing of DNA lesions. UvrC both incises the 5' and 3' sides of the lesion. The N-terminal half is responsible for the 3' incision and the C-terminal half is responsible for the 5' incision. This Helicobacter acinonychis (strain Sheeba) protein is UvrABC system protein C.